We begin with the raw amino-acid sequence, 126 residues long: Holo-[acyl-carrier-protein] synthase (126 aa).

Mg(2+) is bound by residues aspartate 9 and glutamate 58.

This sequence belongs to the P-Pant transferase superfamily. AcpS family. Requires Mg(2+) as cofactor.

Its subcellular location is the cytoplasm. The catalysed reaction is apo-[ACP] + CoA = holo-[ACP] + adenosine 3',5'-bisphosphate + H(+). Functionally, transfers the 4'-phosphopantetheine moiety from coenzyme A to a Ser of acyl-carrier-protein. This chain is Holo-[acyl-carrier-protein] synthase, found in Salmonella newport (strain SL254).